A 189-amino-acid polypeptide reads, in one-letter code: Thermostable direct hemolysin 2 (189 aa).

An N-terminal signal peptide occupies residues methionine 1–alanine 24. Cysteines 175 and 185 form a disulfide.

Belongs to the TDH hemolysin family. As to quaternary structure, homodimer.

Its function is as follows. Bacterial hemolysins are exotoxins that attack blood cell membranes and cause cell rupture by mechanisms not clearly defined. This is Thermostable direct hemolysin 2 (tdh2) from Vibrio parahaemolyticus serotype O3:K6 (strain RIMD 2210633).